The following is a 204-amino-acid chain: Thymidylate kinase (204 aa).

11-18 (GLDKSGKT) provides a ligand contact to ATP.

Belongs to the thymidylate kinase family.

The enzyme catalyses dTMP + ATP = dTDP + ADP. It participates in pyrimidine metabolism; dTTP biosynthesis. This is Thymidylate kinase (TMK) from Cowpox virus (strain GRI-90 / Grishak) (CPV).